The primary structure comprises 142 residues: Large-conductance mechanosensitive channel (142 aa).

2 consecutive transmembrane segments (helical) span residues 10-30 (FAIKGNVIDLAVGVIIGAAFS) and 86-106 (GNFITVAVNFAILAFIIFLMV).

Belongs to the MscL family. In terms of assembly, homopentamer.

The protein resides in the cell inner membrane. Functionally, channel that opens in response to stretch forces in the membrane lipid bilayer. May participate in the regulation of osmotic pressure changes within the cell. This Polaromonas naphthalenivorans (strain CJ2) protein is Large-conductance mechanosensitive channel.